The chain runs to 94 residues: Cell division topological specificity factor (94 aa).

It belongs to the MinE family.

Functionally, prevents the cell division inhibition by proteins MinC and MinD at internal division sites while permitting inhibition at polar sites. This ensures cell division at the proper site by restricting the formation of a division septum at the midpoint of the long axis of the cell. This chain is Cell division topological specificity factor, found in Alkaliphilus metalliredigens (strain QYMF).